A 149-amino-acid chain; its full sequence is UPF0179 protein rrnAC1064 (149 aa).

This sequence belongs to the UPF0179 family.

The sequence is that of UPF0179 protein rrnAC1064 from Haloarcula marismortui (strain ATCC 43049 / DSM 3752 / JCM 8966 / VKM B-1809) (Halobacterium marismortui).